The chain runs to 240 residues: Ribonuclease T2 (240 aa).

The signal sequence occupies residues 1–19 (MRFIAFAVIFSAVYLCSSA). A disulfide bond links Cys41 and Cys46. His56 is a catalytic residue. 3 disulfides stabilise this stretch: Cys66-Cys110, Cys173-Cys227, and Cys191-Cys201. Asn67 and Asn73 each carry an N-linked (GlcNAc...) asparagine glycan. Residues Glu103 and His107 contribute to the active site.

It belongs to the RNase T2 family. Ubiquitous.

It is found in the lysosome lumen. It localises to the endoplasmic reticulum lumen. The protein localises to the secreted. It carries out the reaction a ribonucleotidyl-ribonucleotide-RNA + H2O = a 3'-end 3'-phospho-ribonucleotide-RNA + a 5'-end dephospho-ribonucleoside-RNA + H(+). Has ribonuclease activity, with higher activity at acidic pH. Probably is involved in lysosomal degradation of ribosomal RNA. This Danio rerio (Zebrafish) protein is Ribonuclease T2 (rnaset2).